The sequence spans 309 residues: Neck protein gp13 (309 aa).

As to quaternary structure, gp13 and gp14 form a hetero-oligomer complex with a stoichiometry of 10:5.

It localises to the virion. Functionally, plays a role in the association of the virion head and tail after packaging of viral DNA within the head. Together with gp14, forms a neck at the portal vertex of the head to be ready for the tail attachment. The polypeptide is Neck protein gp13 (13) (Escherichia coli (Bacteriophage T4)).